A 361-amino-acid chain; its full sequence is Ribosomal RNA large subunit methyltransferase M (361 aa).

S-adenosyl-L-methionine is bound by residues S187, 220–223 (CPGG), D239, D259, and D276. K305 (proton acceptor) is an active-site residue.

It belongs to the class I-like SAM-binding methyltransferase superfamily. RNA methyltransferase RlmE family. RlmM subfamily. Monomer.

The protein localises to the cytoplasm. The enzyme catalyses cytidine(2498) in 23S rRNA + S-adenosyl-L-methionine = 2'-O-methylcytidine(2498) in 23S rRNA + S-adenosyl-L-homocysteine + H(+). Functionally, catalyzes the 2'-O-methylation at nucleotide C2498 in 23S rRNA. This chain is Ribosomal RNA large subunit methyltransferase M, found in Shewanella oneidensis (strain ATCC 700550 / JCM 31522 / CIP 106686 / LMG 19005 / NCIMB 14063 / MR-1).